Consider the following 335-residue polypeptide: Holliday junction branch migration complex subunit RuvB (335 aa).

The segment at 1 to 183 (MDERIISSET…FGVIDHLEFY (183 aa)) is large ATPase domain (RuvB-L). ATP contacts are provided by residues Leu-22, Arg-23, Gly-64, Lys-67, Thr-68, Thr-69, 130–132 (EDY), Arg-173, Tyr-183, and Arg-220. Thr-68 contributes to the Mg(2+) binding site. Residues 184-254 (TEEQLTEIVL…LAKEALTLLQ (71 aa)) form a small ATPAse domain (RuvB-S) region. The interval 257 to 335 (PRGLDTIDQK…HLGISYEKEV (79 aa)) is head domain (RuvB-H). Residues Arg-293, Arg-312, and Arg-317 each contribute to the DNA site.

The protein belongs to the RuvB family. In terms of assembly, homohexamer. Forms an RuvA(8)-RuvB(12)-Holliday junction (HJ) complex. HJ DNA is sandwiched between 2 RuvA tetramers; dsDNA enters through RuvA and exits via RuvB. An RuvB hexamer assembles on each DNA strand where it exits the tetramer. Each RuvB hexamer is contacted by two RuvA subunits (via domain III) on 2 adjacent RuvB subunits; this complex drives branch migration. In the full resolvosome a probable DNA-RuvA(4)-RuvB(12)-RuvC(2) complex forms which resolves the HJ.

It is found in the cytoplasm. It catalyses the reaction ATP + H2O = ADP + phosphate + H(+). Its function is as follows. The RuvA-RuvB-RuvC complex processes Holliday junction (HJ) DNA during genetic recombination and DNA repair, while the RuvA-RuvB complex plays an important role in the rescue of blocked DNA replication forks via replication fork reversal (RFR). RuvA specifically binds to HJ cruciform DNA, conferring on it an open structure. The RuvB hexamer acts as an ATP-dependent pump, pulling dsDNA into and through the RuvAB complex. RuvB forms 2 homohexamers on either side of HJ DNA bound by 1 or 2 RuvA tetramers; 4 subunits per hexamer contact DNA at a time. Coordinated motions by a converter formed by DNA-disengaged RuvB subunits stimulates ATP hydrolysis and nucleotide exchange. Immobilization of the converter enables RuvB to convert the ATP-contained energy into a lever motion, pulling 2 nucleotides of DNA out of the RuvA tetramer per ATP hydrolyzed, thus driving DNA branch migration. The RuvB motors rotate together with the DNA substrate, which together with the progressing nucleotide cycle form the mechanistic basis for DNA recombination by continuous HJ branch migration. Branch migration allows RuvC to scan DNA until it finds its consensus sequence, where it cleaves and resolves cruciform DNA. In Listeria monocytogenes serovar 1/2a (strain ATCC BAA-679 / EGD-e), this protein is Holliday junction branch migration complex subunit RuvB.